We begin with the raw amino-acid sequence, 384 residues long: tRNA-specific 2-thiouridylase MnmA (384 aa).

ATP is bound by residues 29 to 36 (AMSGGVDS) and Leu-55. Residue Cys-123 is the Nucleophile of the active site. Cys-123 and Cys-220 are oxidised to a cystine. Gly-147 contributes to the ATP binding site. The interaction with tRNA stretch occupies residues 169–171 (RDQ). Cys-220 functions as the Cysteine persulfide intermediate in the catalytic mechanism.

Belongs to the MnmA/TRMU family.

The protein resides in the cytoplasm. It catalyses the reaction S-sulfanyl-L-cysteinyl-[protein] + uridine(34) in tRNA + AH2 + ATP = 2-thiouridine(34) in tRNA + L-cysteinyl-[protein] + A + AMP + diphosphate + H(+). Functionally, catalyzes the 2-thiolation of uridine at the wobble position (U34) of tRNA, leading to the formation of s(2)U34. The polypeptide is tRNA-specific 2-thiouridylase MnmA (Dinoroseobacter shibae (strain DSM 16493 / NCIMB 14021 / DFL 12)).